The primary structure comprises 83 residues: Kunitz-type serine protease inhibitor textilinin-3 (83 aa).

Positions 1–24 (MSSGGLLLLLGLLTLWEVLTPVSS) are cleaved as a signal peptide. A BPTI/Kunitz inhibitor domain is found at 31-81 (CKLPAETGRCNAKIPRFYYNPRQHQCIEFLYGGCGGNANNFKTIKECESTC). 3 disulfides stabilise this stretch: cysteine 31–cysteine 81, cysteine 40–cysteine 64, and cysteine 56–cysteine 77.

It belongs to the venom Kunitz-type family. Expressed by the venom gland.

The protein resides in the secreted. Its function is as follows. Serine protease inhibitor. Does not inhibit plasmin, and does not reduce blood loss in the mouse tail vein blood loss model. The chain is Kunitz-type serine protease inhibitor textilinin-3 from Pseudonaja textilis textilis (Eastern brown snake).